A 256-amino-acid chain; its full sequence is Small ribosomal subunit protein eS1 (256 aa).

Over residues 1-18 the composition is skewed to basic residues; that stretch reads MAVGKNKRLSKGKKGLKK. The interval 1 to 22 is disordered; that stretch reads MAVGKNKRLSKGKKGLKKKTQD. Ala2 bears the N-acetylalanine; partial mark.

This sequence belongs to the eukaryotic ribosomal protein eS1 family. In terms of assembly, component of the small ribosomal subunit. Mature ribosomes consist of a small (40S) and a large (60S) subunit. The 40S subunit contains about 33 different proteins and 1 molecule of RNA (18S). The 60S subunit contains about 49 different proteins and 3 molecules of RNA (25S, 5.8S and 5S).

The protein resides in the cytoplasm. The chain is Small ribosomal subunit protein eS1 from Pyricularia oryzae (strain Y34) (Rice blast fungus).